Reading from the N-terminus, the 329-residue chain is Mas-related G-protein coupled receptor member X2 (329 aa).

The Extracellular portion of the chain corresponds to 1 to 33 (MDPTTPAWRTESTTMNGNDQALPLLCGKEILIS). Residues 34 to 54 (VFLILFIALVGLVGNGFVLWL) form a helical membrane-spanning segment. The Cytoplasmic portion of the chain corresponds to 55–63 (LGFRMRRNA). The chain crosses the membrane as a helical span at residues 64-84 (FSVYVLSLAGADFLFLCFQII). The Extracellular portion of the chain corresponds to 85-96 (NCLVYLSNFFCS). The chain crosses the membrane as a helical span at residues 97 to 117 (SSINFPSFFTTVMTCAYLAGL). Residues 118 to 144 (SMLSTISTERCLSVLWPIWYRCRRPRH) lie on the Cytoplasmic side of the membrane. The chain crosses the membrane as a helical span at residues 145–165 (LSAVACVLLWALSLLLSILEG). The Extracellular portion of the chain corresponds to 166–183 (KFCGLFGDGDSGWCQTFD). Residues 184-204 (LITAAWLIFLFMVLCGSSLAL) traverse the membrane as a helical segment. At 205-227 (LVRILCGSRGLPLTRLYLTILLT) the chain is on the cytoplasmic side. The chain crosses the membrane as a helical span at residues 228 to 248 (VLVFLLCGLPFGIQWFLILWI). The Extracellular portion of the chain corresponds to 249–263 (WKNSDVLFCHIHPVS). A helical membrane pass occupies residues 264–284 (VVLSSLNSSANPIIYFFVGSF). Over 285–329 (RKQWQLQQPILKLALQRALQDIAEVDHSEGCFRQGTPEMSRSSLV) the chain is Cytoplasmic.

The protein belongs to the G-protein coupled receptor 1 family. Mas subfamily.

Its subcellular location is the cell membrane. Mast cell-specific receptor for basic secretagogues, i.e. cationic amphiphilic drugs, as well as endo- or exogenous peptides, consisting of a basic head group and a hydrophobic core. Recognizes and binds small molecules containing a cyclized tetrahydroisoquinoline (THIQ), such as non-steroidal neuromuscular blocking drugs (NMBDs), including tubocurarine and atracurium. In response to these compounds, mediates pseudo-allergic reactions characterized by histamine release, inflammation and airway contraction. This is Mas-related G-protein coupled receptor member X2 (MRGPRX2) from Gorilla gorilla gorilla (Western lowland gorilla).